A 206-amino-acid polypeptide reads, in one-letter code: Somatotropin (206 aa).

The N-terminal stretch at 1-18 is a signal peptide; sequence MLDRVVVLLSVLCLGVSS. Position 19 is a pyrrolidone carboxylic acid (Gln19). Residue His37 participates in Zn(2+) binding. Cys70 and Cys179 are disulfide-bonded. Glu188 lines the Zn(2+) pocket. Cys196 and Cys204 are oxidised to a cystine.

It belongs to the somatotropin/prolactin family.

It localises to the secreted. Growth hormone plays an important role in growth control and is involved in the regulation of several anabolic processes. Implicated as an osmoregulatory substance important for seawater adaptation. The sequence is that of Somatotropin (gh) from Pseudocaranx dentex (White trevally).